Consider the following 577-residue polypeptide: Moesin (577 aa).

Positions 2–295 constitute an FERM domain; sequence PKTISVRVTT…GNHELYMRRR (294 aa). Residue Ser-74 is modified to Phosphoserine. The residue at position 79 (Lys-79) is an N6-acetyllysine. At Lys-83 the chain carries N6-succinyllysine. The [IL]-x-C-x-x-[DE] motif signature appears at 115 to 120; that stretch reads IYCPPE. Tyr-116 bears the Phosphotyrosine mark. Position 117 is an S-nitrosocysteine (Cys-117). 2 positions are modified to N6-acetyllysine: Lys-139 and Lys-165. Disordered stretches follow at residues 322–342, 358–453, and 468–549; these read LLEN…KIER, TKKA…QMVQ, and STPH…AENM. Basic and acidic residues predominate over residues 358 to 401; it reads TKKAQQELEEQTRRALELEQERKRAQSEAEKLAKERQEAEEAKE. Ser-407 is modified (phosphoserine). Basic and acidic residues-rich tracts occupy residues 438–447 and 492–519; these read KESEAEECHQ and AELR…ERVQ. Residue Ser-527 is modified to Phosphoserine. The segment covering 531–549 has biased composition (basic and acidic residues); that stretch reads NARDESKKTTNDMIHAENM. Thr-558 carries the phosphothreonine; by ROCK2 and STK10 modification.

As to quaternary structure, in resting T-cells, part of a PAG1-NHERF1-MSN complex which is disrupted upon TCR activation. Interacts with NHERF1. Interacts with PPP1R16B. Interacts with PDZD8. Interacts with SELPLG and SYK; these interactions mediate the activation of SYK by SELPLG. Interacts with PDPN (via cytoplasmic domain); this interaction activates RHOA and promotes epithelial-mesenchymal transition. Interacts with SPN/CD43 cytoplasmic tail. Interacts with CD44. Interacts with ICAM2. Interacts with ICAM3 (via C-terminus). Interacts with PDZD8. Interacts with F-actin. Interacts with CD46. Interacts with PTPN6. In terms of processing, phosphorylation on Thr-558 is crucial for the formation of microvilli-like structures. Phosphorylation by ROCK2 suppresses the head-to-tail association of the N-terminal and C-terminal halves resulting in an opened conformation which is capable of actin and membrane-binding. Phosphorylation on Thr-558 by STK10 negatively regulates lymphocyte migration and polarization. S-nitrosylation of Cys-117 is induced by interferon-gamma and oxidatively-modified low-densitity lipoprotein (LDL(ox)) implicating the iNOS-S100A8/9 transnitrosylase complex.

It is found in the cell membrane. It localises to the cytoplasm. The protein resides in the cytoskeleton. Its subcellular location is the apical cell membrane. The protein localises to the cell projection. It is found in the microvillus membrane. It localises to the microvillus. Its activity is regulated as follows. A head-to-tail association, of the N-terminal and C-terminal halves results in a closed conformation (inactive form) which is incapable of actin or membrane-binding. Ezrin-radixin-moesin (ERM) family protein that connects the actin cytoskeleton to the plasma membrane and thereby regulates the structure and function of specific domains of the cell cortex. Tethers actin filaments by oscillating between a resting and an activated state providing transient interactions between moesin and the actin cytoskeleton. Once phosphorylated on its C-terminal threonine, moesin is activated leading to interaction with F-actin and cytoskeletal rearrangement. These rearrangements regulate many cellular processes, including cell shape determination, membrane transport, and signal transduction. The role of moesin is particularly important in immunity acting on both T and B-cells homeostasis and self-tolerance, regulating lymphocyte egress from lymphoid organs. Modulates phagolysosomal biogenesis in macrophages. Participates also in immunologic synapse formation. The polypeptide is Moesin (Rattus norvegicus (Rat)).